A 469-amino-acid polypeptide reads, in one-letter code: UDP-N-acetylmuramate--L-alanine ligase (469 aa).

120–126 (GTHGKTT) contacts ATP.

This sequence belongs to the MurCDEF family.

It is found in the cytoplasm. It catalyses the reaction UDP-N-acetyl-alpha-D-muramate + L-alanine + ATP = UDP-N-acetyl-alpha-D-muramoyl-L-alanine + ADP + phosphate + H(+). Its pathway is cell wall biogenesis; peptidoglycan biosynthesis. Cell wall formation. This chain is UDP-N-acetylmuramate--L-alanine ligase, found in Acetivibrio thermocellus (strain ATCC 27405 / DSM 1237 / JCM 9322 / NBRC 103400 / NCIMB 10682 / NRRL B-4536 / VPI 7372) (Clostridium thermocellum).